The following is a 224-amino-acid chain: Na(+)-translocating NADH-quinone reductase subunit D (224 aa).

The next 5 helical transmembrane spans lie at 43-63, 67-87, 104-124, 132-152, and 179-199; these read TVMAIALTLVTGFSNLFISMI, IPSSIRMIVQMVIIASLVIVV, VFVGLIITNCIVMGRAEAFAM, FFDGIGNGLGYSAMLLVLGFV, and NGLLLLPPSAFFLIGLIIWAL.

Belongs to the NqrDE/RnfAE family. In terms of assembly, composed of six subunits; NqrA, NqrB, NqrC, NqrD, NqrE and NqrF.

The protein resides in the cell inner membrane. The catalysed reaction is a ubiquinone + n Na(+)(in) + NADH + H(+) = a ubiquinol + n Na(+)(out) + NAD(+). NQR complex catalyzes the reduction of ubiquinone-1 to ubiquinol by two successive reactions, coupled with the transport of Na(+) ions from the cytoplasm to the periplasm. NqrA to NqrE are probably involved in the second step, the conversion of ubisemiquinone to ubiquinol. This Pseudomonas aeruginosa (strain LESB58) protein is Na(+)-translocating NADH-quinone reductase subunit D.